A 75-amino-acid chain; its full sequence is MLLVLAIKTLVLGLCMLPISAAALGVGILFAGYNIAVSRNPDEAETIFNGTLMGFALVETFVFMSFFFGVIVYFI.

2 consecutive transmembrane segments (helical) span residues 10-30 (LVLG…GILF) and 55-75 (FALV…VYFI).

The protein belongs to the ATPase C chain family. As to quaternary structure, F-type ATPases have 2 components, CF(1) - the catalytic core - and CF(0) - the membrane proton channel. CF(1) has five subunits: alpha(3), beta(3), gamma(1), delta(1), epsilon(1). CF(0) has three main subunits: a, b and c.

It localises to the mitochondrion membrane. Functionally, mitochondrial membrane ATP synthase (F(1)F(0) ATP synthase or Complex V) produces ATP from ADP in the presence of a proton gradient across the membrane which is generated by electron transport complexes of the respiratory chain. F-type ATPases consist of two structural domains, F(1) - containing the extramembraneous catalytic core and F(0) - containing the membrane proton channel, linked together by a central stalk and a peripheral stalk. During catalysis, ATP synthesis in the catalytic domain of F(1) is coupled via a rotary mechanism of the central stalk subunits to proton translocation. Part of the complex F(0) domain. A homomeric c-ring of probably 10 subunits is part of the complex rotary element. This chain is ATP synthase subunit 9, mitochondrial (ATP9), found in Paramecium tetraurelia.